Here is a 466-residue protein sequence, read N- to C-terminus: 3-isopropylmalate dehydratase large subunit (466 aa).

[4Fe-4S] cluster is bound by residues cysteine 347, cysteine 407, and cysteine 410.

The protein belongs to the aconitase/IPM isomerase family. LeuC type 1 subfamily. In terms of assembly, heterodimer of LeuC and LeuD. The cofactor is [4Fe-4S] cluster.

It catalyses the reaction (2R,3S)-3-isopropylmalate = (2S)-2-isopropylmalate. The protein operates within amino-acid biosynthesis; L-leucine biosynthesis; L-leucine from 3-methyl-2-oxobutanoate: step 2/4. Functionally, catalyzes the isomerization between 2-isopropylmalate and 3-isopropylmalate, via the formation of 2-isopropylmaleate. This chain is 3-isopropylmalate dehydratase large subunit, found in Escherichia coli O45:K1 (strain S88 / ExPEC).